The primary structure comprises 475 residues: Tetratricopeptide repeat protein 29 (475 aa).

TPR repeat units follow at residues 92–131 (DALR…EDAE), 136–173 (FEDV…AQLI), 182–215 (AEAH…TQGR), 234–267 (LRTY…AKEG), 274–307 (GEAS…STEL), 314–347 (GRAY…ARNN), and 354–387 (VRAS…TVEL). A disordered region spans residues 436–475 (DIEPDPVTEEFRGSTVETVSQNSEHLEELSRFPGDQKNET). Basic and acidic residues predominate over residues 459-475 (EHLEELSRFPGDQKNET).

It localises to the cytoplasm. Its subcellular location is the cytoskeleton. The protein localises to the flagellum axoneme. Axonemal protein which is implicated in axonemal and/or peri-axonemal structure assembly and regulates flagellum assembly and beating and therefore sperm motility. The chain is Tetratricopeptide repeat protein 29 (TTC29) from Macaca fascicularis (Crab-eating macaque).